The sequence spans 76 residues: Small ribosomal subunit protein bS16 (76 aa).

This sequence belongs to the bacterial ribosomal protein bS16 family.

This Sulfurovum sp. (strain NBC37-1) protein is Small ribosomal subunit protein bS16.